The chain runs to 295 residues: Bifunctional protein FolD (295 aa).

NADP(+)-binding positions include 172-174 (GRS), S197, and I238.

It belongs to the tetrahydrofolate dehydrogenase/cyclohydrolase family. As to quaternary structure, homodimer.

The catalysed reaction is (6R)-5,10-methylene-5,6,7,8-tetrahydrofolate + NADP(+) = (6R)-5,10-methenyltetrahydrofolate + NADPH. The enzyme catalyses (6R)-5,10-methenyltetrahydrofolate + H2O = (6R)-10-formyltetrahydrofolate + H(+). The protein operates within one-carbon metabolism; tetrahydrofolate interconversion. Its function is as follows. Catalyzes the oxidation of 5,10-methylenetetrahydrofolate to 5,10-methenyltetrahydrofolate and then the hydrolysis of 5,10-methenyltetrahydrofolate to 10-formyltetrahydrofolate. In Rickettsia akari (strain Hartford), this protein is Bifunctional protein FolD.